The chain runs to 89 residues: Small ribosomal subunit protein uS15 (89 aa).

Belongs to the universal ribosomal protein uS15 family. In terms of assembly, part of the 30S ribosomal subunit. Forms a bridge to the 50S subunit in the 70S ribosome, contacting the 23S rRNA.

Functionally, one of the primary rRNA binding proteins, it binds directly to 16S rRNA where it helps nucleate assembly of the platform of the 30S subunit by binding and bridging several RNA helices of the 16S rRNA. In terms of biological role, forms an intersubunit bridge (bridge B4) with the 23S rRNA of the 50S subunit in the ribosome. This chain is Small ribosomal subunit protein uS15, found in Chlamydia caviae (strain ATCC VR-813 / DSM 19441 / 03DC25 / GPIC) (Chlamydophila caviae).